A 1813-amino-acid chain; its full sequence is Sucrase-isomaltase, intestinal (1813 aa).

Residues 1–12 lie on the Cytoplasmic side of the membrane; the sequence is MARKKSSGLKIT. The residue at position 7 (S7) is a Phosphoserine; by PKA. A helical; Signal-anchor for type II membrane protein membrane pass occupies residues 13-32; it reads LIVLLAIVTIIAIALVAILP. At 33 to 1813 the chain is on the lumenal side; that stretch reads TKTPAVELVS…LDEPIEISWT (1781 aa). The P-type 1 domain occupies 46 to 95; sequence GKCPSAENDRLDEKINCIPDQFPTQALCAMQGCCWNPRNESPTPWCSFAN. 3 cysteine pairs are disulfide-bonded: C48–C79, C62–C78, and C73–C91. An isomaltase region spans residues 95-991; the sequence is NNHGYEFEKI…DLELNTATAR (897 aa). The N-linked (GlcNAc...) asparagine glycan is linked to N127. Positions 250 and 374 each coordinate substrate. Sulfotyrosine is present on Y377. N388 carries N-linked (GlcNAc...) asparagine glycosylation. D491 acts as the Nucleophile; for isomaltase activity in catalysis. The cysteines at positions 506 and 531 are disulfide-linked. R574 is a substrate binding site. The active-site For isomaltase activity is D590. C621 and C632 form a disulfide bridge. Residue H648 coordinates substrate. N-linked (GlcNAc...) asparagine glycans are attached at residues N669, N791, N896, and N911. Residues 917–962 form the P-type 2 domain; it reads NQVSLDSEKIDCFPDNNPENKQNCEERGCLWEPNSAAEGPRCYFPK. Residues 992 to 1813 form a sucrase region; the sequence is IKMPSNPISV…LDEPIEISWT (822 aa). Residues N1221 and N1289 are each glycosylated (N-linked (GlcNAc...) asparagine). Sulfotyrosine is present on Y1294. N-linked (GlcNAc...) asparagine glycans are attached at residues N1326 and N1340. Residues Y1368 and Y1371 each carry the sulfotyrosine modification. The active-site Nucleophile; for sucrase activity is D1380. The For sucrase activity role is filled by E1383. N-linked (GlcNAc...) asparagine glycosylation is present at N1432. The active-site Proton donor; for sucrase activity is the D1486. N-linked (GlcNAc...) asparagine glycans are attached at residues N1521, N1545, N1558, N1703, and N1772.

This sequence belongs to the glycosyl hydrolase 31 family. In terms of assembly, the resulting sucrase and isomaltase subunits stay associated with one another in a complex by non-covalent linkages. In terms of processing, the precursor is proteolytically cleaved when exposed to pancreatic proteases in the intestinal lumen. Post-translationally, sulfated.

The protein resides in the apical cell membrane. The enzyme catalyses Hydrolysis of sucrose and maltose by an alpha-D-glucosidase-type action.. It carries out the reaction Hydrolysis of (1-&gt;6)-alpha-D-glucosidic linkages in some oligosaccharides produced from starch and glycogen by alpha-amylase, and in isomaltose.. Its function is as follows. Plays an important role in the final stage of carbohydrate digestion. Isomaltase activity is specific for both alpha-1,4- and alpha-1,6-oligosaccharides. The sequence is that of Sucrase-isomaltase, intestinal (SI) from Suncus murinus (Asian house shrew).